We begin with the raw amino-acid sequence, 340 residues long: Delta(1)-pyrroline-2-carboxylate reductase 2 (340 aa).

Ser50 (charge relay system) is an active-site residue. His51 acts as the Proton donor in catalysis. Residue Arg55 participates in substrate binding. 123–127 (HFSAL) is a binding site for NADP(+). Substrate is bound at residue Thr163. 181–183 (DFA) lines the NADP(+) pocket. Residue 189–190 (RG) participates in substrate binding. The active-site Charge relay system is Asp191. Residues 232–233 (HK) and 307–313 (RLPSQRR) each bind NADP(+).

It belongs to the LDH2/MDH2 oxidoreductase family. As to quaternary structure, homodimer.

The catalysed reaction is L-proline + NAD(+) = 1-pyrroline-2-carboxylate + NADH + H(+). It catalyses the reaction L-proline + NADP(+) = 1-pyrroline-2-carboxylate + NADPH + H(+). Functionally, catalyzes the reduction of Delta(1)-pyrroline-2-carboxylate (Pyr2C) to L-proline, using NADPH as the electron donor. May be involved in a degradation pathway that converts trans-3-hydroxy-L-proline (t3LHyp) to L-proline. The protein is Delta(1)-pyrroline-2-carboxylate reductase 2 of Burkholderia multivorans (strain ATCC 17616 / 249).